Reading from the N-terminus, the 81-residue chain is Small ribosomal subunit protein bS16 (81 aa).

The protein belongs to the bacterial ribosomal protein bS16 family.

In Teredinibacter turnerae (strain ATCC 39867 / T7901), this protein is Small ribosomal subunit protein bS16.